Consider the following 275-residue polypeptide: Seminase (275 aa).

A signal peptide spans 1 to 19 (MKRLLFLFLLAGILINNHA). Asn-23 carries N-linked (GlcNAc...) asparagine glycosylation. Residues 44–268 (VIGGRVTTNA…VKPFIVKGIK (225 aa)) form the Peptidase S1 domain. An intrachain disulfide couples Cys-70 to Cys-86. Catalysis depends on charge relay system residues His-85 and Asp-131. 2 disulfide bridges follow: Cys-194–Cys-210 and Cys-220–Cys-244. The active-site Charge relay system is the Ser-224.

Belongs to the peptidase S1 family. Post-translationally, undergoes cleavage in the male during mating with a cleaved product detected in the ejaculatory duct and/or bulb of males by 8-10 minutes after the start of mating. Further cleavage occurs in the mated female. As to expression, produced in the male accessory glands and secreted into seminal fluid.

The protein resides in the secreted. Its function is as follows. Seminal fluid protease which is required for cleavage and probably also activation of the metalloprotease Semp1. Also required for a number of female post-mating responses independent of Semp1 including egg laying and sperm usage. The polypeptide is Seminase (Drosophila melanogaster (Fruit fly)).